A 407-amino-acid polypeptide reads, in one-letter code: MALGNALYPLTATVFLCVVGFATSSNENSRFLINSRLEVNVKSLLGEICGTNSSLLSIGVKSLSNEYSDRTVENLCGNETTEVLLWIPVGNFGNLAELGLSSRYLGKGAGDEDFAEYCSYDVTTKSCTTDNGAVEGSILLLAEKFPERYELRDLVYKKWRNSTHLGAPILAYGTLKNREPAYKYVDQDISYLADTRIEYVLPATVTHGIPLSVYRGKTESYKLVAGETYYSRIFKTINAIRYMSPYSTINVTVIGSEGRDYREFRAKLVTVYTDEEGYGWSKSLSSIEAAMIETKLTETHVEYALPVNLYDTQPPVLSPLLPALNEGNSIVDKGQQPAKGIVAKPENIHIHISELDFGQAYPGFRNVAIGAAILFFSVLGVAIIDMIRRTIANRRAKRLHLGKYSRT.

Residues 1–24 form the signal peptide; the sequence is MALGNALYPLTATVFLCVVGFATS. The Extracellular portion of the chain corresponds to 25–366; sequence SNENSRFLIN…FGQAYPGFRN (342 aa). N-linked (GlcNAc...) asparagine glycans are attached at residues Asn52, Asn78, Asn161, and Asn250. The helical transmembrane segment at 367–387 threads the bilayer; the sequence is VAIGAAILFFSVLGVAIIDMI. Residues 388–407 lie on the Cytoplasmic side of the membrane; sequence RRTIANRRAKRLHLGKYSRT.

(Microbial infection) Interacts with ENO/enolase from parasites P.berghei and P.falciparum. In terms of tissue distribution, expressed in the female midgut epithelium.

Its subcellular location is the cell membrane. In terms of biological role, (Microbial infection) Acts as a receptor for ENO/enolase from parasites P.berghei and P.falciparum. The interaction is involved in the invasion of the mosquito midgut by P.berghei ookinete, but is dispensable for P.falciparum ookinete invasion. The polypeptide is Enolase-binding protein (Anopheles gambiae (African malaria mosquito)).